Consider the following 141-residue polypeptide: Nucleoside triphosphatase NudI (141 aa).

A Nudix hydrolase domain is found at 1-141 (MRQRTIVCPL…RHTLALKGLL (141 aa)). Positions 38-59 (GGVEPGERIEEALRREVREELG) match the Nudix box motif.

The protein belongs to the Nudix hydrolase family. NudI subfamily. As to quaternary structure, monomer. Mg(2+) is required as a cofactor.

The enzyme catalyses a ribonucleoside 5'-triphosphate + H2O = a ribonucleoside 5'-phosphate + diphosphate + H(+). The catalysed reaction is a 2'-deoxyribonucleoside 5'-triphosphate + H2O = a 2'-deoxyribonucleoside 5'-phosphate + diphosphate + H(+). It catalyses the reaction dUTP + H2O = dUMP + diphosphate + H(+). It carries out the reaction dTTP + H2O = dTMP + diphosphate + H(+). The enzyme catalyses dCTP + H2O = dCMP + diphosphate + H(+). In terms of biological role, catalyzes the hydrolysis of nucleoside triphosphates, with a preference for pyrimidine deoxynucleoside triphosphates (dUTP, dTTP and dCTP). This is Nucleoside triphosphatase NudI from Salmonella agona (strain SL483).